A 180-amino-acid chain; its full sequence is Adenine phosphoribosyltransferase (180 aa).

Ser-2 carries the post-translational modification N-acetylserine. A phosphoserine mark is found at Ser-15 and Ser-30. Tyr-60 carries the phosphotyrosine modification. Ser-66 bears the Phosphoserine mark. Lys-114 is modified (N6-acetyllysine). Position 135 is a phosphothreonine (Thr-135).

The protein belongs to the purine/pyrimidine phosphoribosyltransferase family. As to quaternary structure, homodimer.

The protein resides in the cytoplasm. The catalysed reaction is AMP + diphosphate = 5-phospho-alpha-D-ribose 1-diphosphate + adenine. It functions in the pathway purine metabolism; AMP biosynthesis via salvage pathway; AMP from adenine: step 1/1. Functionally, catalyzes a salvage reaction resulting in the formation of AMP, that is energically less costly than de novo synthesis. In Mastomys natalensis (African soft-furred rat), this protein is Adenine phosphoribosyltransferase.